The sequence spans 200 residues: Small ribosomal subunit protein uS4 (200 aa).

The tract at residues 22 to 42 (TGKELEKRPYAPGPHGPNQRK) is disordered. The S4 RNA-binding domain maps to 92–152 (ARLDNLVYRM…EKSNSLVVVK (61 aa)).

The protein belongs to the universal ribosomal protein uS4 family. In terms of assembly, part of the 30S ribosomal subunit. Contacts protein S5. The interaction surface between S4 and S5 is involved in control of translational fidelity.

Its function is as follows. One of the primary rRNA binding proteins, it binds directly to 16S rRNA where it nucleates assembly of the body of the 30S subunit. With S5 and S12 plays an important role in translational accuracy. In Bacillus mycoides (strain KBAB4) (Bacillus weihenstephanensis), this protein is Small ribosomal subunit protein uS4.